Reading from the N-terminus, the 371-residue chain is MSKRDYYEVLGLSKGASTDEIKKAYRRLAKKYHPDVSKEENAIEKFKEVQEAYEVLSDDQKRAQYDQFGHAGANQGFGGFGGGGDFGGGFGFEDIFSSFFGGGGGRRRDPNAPRQGADLQYQVTLDFEEAIFGKELNVEIPVEDPCDTCKGSGAKPGTSKETCKHCSGSGQVSVEQNTPFGRIVNRQACGHCSGTGQIIKEKCTTCHGSGKVRKRKKINVKIPAGIDNGQQIRVSGKGEAGVNGGPAGDLYVVVHVRNHEFFEREGDHIICEMPLTFAQMALGDEVEVPTVHGKVKLKIPAGTQTGTEFRLKGKGAPNVRGYGQGDQYVVVRVVVPTKLTSQQKDLLREFAGQEEQDDSLFGKLKRAFKGE.

The region spanning 5–69 (DYYEVLGLSK…QKRAQYDQFG (65 aa)) is the J domain. Residues 133 to 215 (GKELNVEIPV…CHGSGKVRKR (83 aa)) form a CR-type zinc finger. Cys146, Cys149, Cys163, Cys166, Cys189, Cys192, Cys203, and Cys206 together coordinate Zn(2+). CXXCXGXG motif repeat units follow at residues 146 to 153 (CDTCKGSG), 163 to 170 (CKHCSGSG), 189 to 196 (CGHCSGTG), and 203 to 210 (CTTCHGSG).

The protein belongs to the DnaJ family. Homodimer. Requires Zn(2+) as cofactor.

The protein localises to the cytoplasm. Functionally, participates actively in the response to hyperosmotic and heat shock by preventing the aggregation of stress-denatured proteins and by disaggregating proteins, also in an autonomous, DnaK-independent fashion. Unfolded proteins bind initially to DnaJ; upon interaction with the DnaJ-bound protein, DnaK hydrolyzes its bound ATP, resulting in the formation of a stable complex. GrpE releases ADP from DnaK; ATP binding to DnaK triggers the release of the substrate protein, thus completing the reaction cycle. Several rounds of ATP-dependent interactions between DnaJ, DnaK and GrpE are required for fully efficient folding. Also involved, together with DnaK and GrpE, in the DNA replication of plasmids through activation of initiation proteins. This Bacillus cereus (strain G9842) protein is Chaperone protein DnaJ.